The primary structure comprises 1937 residues: MLDMMNNSLSYNRPECINFQNNSVQKNVIRVCENEPNTFVGSGIPSQIIGKQGDIYLDRITRIYYKKINGVWVKNVCNNHRCCYPKECKGNPHTKGEKGETGPKGIKGEKGDRGLKGEKGNNGDPGEKGEKGAKGDKGESGEKGAKGDKGDKGDIGEKGEKGDKGDIGEKGEKGDKGDIGEKGDKGDLGEKGEKGDPGQKGEKGDKGDFGDKGDKGDIGEKGDKGDIGDKGEIGNKGDVGEKGSKGDKGIDGTSILFGFGIPSPDLGVDGDLYLDANTDELYGKVNGQWIPITNLKGEKGDKGNKGIDGEKGNKGDTGDKGIDGSKGDKGDTGNKGDIGDKGDQGIKGDIGDKGEKGDIGEKGDKGEKGIKGDKGDIGEKGNKGDIGDKGEKGDKGIDGDKGIKGDKGDIGEKGDKGDIGEKGNKGEKGDKGDKGDIGEKGDKGDTGSKGDKGDKGEKGDKGDKGEKGDIGDKGEKGDKGDKGDKGDKGDKGDKGDTGDKGDKGDKGDKGDKGDNGTSILFGSGPPSPDLGMVGDLYIDVTTDELYGKVNAKMNDNIRVSAKVNVNKQITLQATGQWIPLTNLKGDKGDKGINGNKGDKGEKGDKGNPGTNAGKGEKGDKGDKGDAGTSILFGQGAPDPNQGVDGDIYIDTLTGELYRKVNGLWVPEIDIKGDKGEKGDKGNAGDKGTSGEKGDLGSKGEKGDTGEKGDKGNKGDRGDKGIKGDIGSKGDKGDIGNKGDKGDRGDKGIKGDAGLKGDKGDIGQKGDKGTKGDRGDKGEKGDAGLKGNKGDIGLKGDKGTKGDRGDKGTKGDRGDKGDIGNKGDKGDKGTKGDRGDKGVKGDKGDKGNKGDKGNIGIKGDKGDRSDKGLKGDKGDKGDTGDIGLKGDKGDIGEKGIKGDKGINGSKGYKGDKGDKGSKGDKGNKGDKGSKGDKGDIGIKGSKGDKGDKGDKGSKGDKGDIGSKGDKGDKGDIGTKGDKGTKGDKGIKGDIGSKGDKGSKGDKGSKGDKGDIGSKGDKGDKGDKGSKGDKGSKGIKGDKGDKGTKGDKGIKGDKGDKGIKGDKGDKGDKGDKGIKGDKGDKGDKGDKGDKGTKGDKGDKGDKGSKGDKGDKGDKGDKGEKGSKGDKGDKGDKGDKGDKGDKGDTATCEIVNTDGQTRVSACNTGFVKIEASGYEITTAPNGSSDLAPDPFDPSNVSGMNTKLFGIQNGAFRSGNFTATNLSDIGQYSAVFGYQTTATGSGSIVYGINNSSGISSGSNGSLVGGLANTGGIIRSFSGAEGSIAFGSSEINGIITTGFGAQGSIVGGYSSGGTIATGSGANASEAFGQATTGSLITTGPGAIGSSTRGYSVGNSVITTGLASWASQITGYASNSGIIFSGSGTSTSDIIASVTDSSTLTIGDGSIGSSIRGYCSSGSLISLGPNSNGSIINATVNNFSTLITSSGVNGSSIVARANNSGLISISGNCFGSQFVFNSINGGNITIGSTHAGSQIVGSANTSGIITVVGGLNGTLVAANSSSTSGVRISTSFGSLLAGNATTGGWFRPGQAQGSVIAGQASASGVILTAFNAGCNVIGYANRGSTLGINQNAFGYSVMGYADLNSTITSNALGANACRIMGYALNNSTIFMDSLVAANATDLFGYANNSGVIQAADQCAGALARGVAQNNSSIVTRGNGSMTFGFSNNNSTIFTGQFSDGCFVGGYANSGGTISTGSTSPASHVFGFSNSGSFITTGNNTNASTVFGYATANSTITTGANSNGSLAVGYTGSSGELLGALGQTSFAIGRNNTASGAYSGAIGISSYANMEGSFAHSSFQDTVNPVSAGRSQNIKVMGRKVGTQIVLANGSYATLPYDGYGDVFARLIGSSGTAVGLTFQVTRTAGTYTVAPPITPSGGILWLSPSGVAAPPLAITALGTSGFTITLTDAQNYNCYFDIVNYSS.

N-linked (GlcNAc...) asparagine; by host glycans are attached at residues asparagine 6 and asparagine 21. Disordered stretches follow at residues 88–248 (CKGN…KGDK), 294–531 (NLKG…PDLG), 583–643 (LKGD…NQGV), and 670–1144 (IKGD…DTAT). 5 Collagen-like domains span residues 102–161 (GPKG…KGEK), 168–227 (GEKG…KGDI), 297–356 (GEKG…KGEK), 363–422 (GDKG…IGEK), and 453–512 (GDKG…KGDK). The span at 296-514 (KGEKGDKGNK…DKGDKGDKGD (219 aa)) shows a compositional bias: basic and acidic residues. Asparagine 515 carries N-linked (GlcNAc...) asparagine; by host glycosylation. Composition is skewed to basic and acidic residues over residues 584 to 605 (KGDK…KGDK), 614 to 625 (KGEKGDKGDKGD), and 670 to 899 (IKGD…KGDK). Collagen-like domains lie at 672-731 (GDKG…KGDK), 735-854 (GNKG…KGNI), 867-926 (GLKG…KGDK), 936-995 (GIKG…KGDK), and 1023-1142 (GSKG…KGDT). Asparagine 902 carries an N-linked (GlcNAc...) asparagine; by host glycan. Residues 907 to 1141 (YKGDKGDKGS…DKGDKGDKGD (235 aa)) show a composition bias toward basic and acidic residues. 35 N-linked (GlcNAc...) asparagine; by host glycosylation sites follow: asparagine 1178, asparagine 1192, asparagine 1212, asparagine 1217, asparagine 1245, asparagine 1246, asparagine 1255, asparagine 1317, asparagine 1422, asparagine 1427, asparagine 1432, asparagine 1443, asparagine 1452, asparagine 1477, asparagine 1494, asparagine 1506, asparagine 1513, asparagine 1533, asparagine 1598, asparagine 1619, asparagine 1620, asparagine 1632, asparagine 1641, asparagine 1663, asparagine 1664, asparagine 1672, asparagine 1682, asparagine 1683, asparagine 1732, asparagine 1735, asparagine 1746, asparagine 1756, asparagine 1784, asparagine 1842, and asparagine 1934.

Post-translationally, may be hydroxylated on lysine by the viral-encoded procollagen-lysine,2-oxoglutarate 5-dioxygenase.

It localises to the virion. May participate in the formation of a layer of cross-linked glycosylated fibrils at the viral surface thus giving it a hairy-like appearance. This Acanthamoeba polyphaga mimivirus (APMV) protein is Collagen-like protein 7.